The primary structure comprises 305 residues: Delta-9 acyl-lipid desaturase 1 (305 aa).

The interval 1–20 is disordered; sequence MSLSASEKEENNKKMAADKA. 2 helical membrane passes run 39-59 and 60-80; these read IVKA…PFNF and TWPA…GITV. Positions 83, 88, 120, 123, and 124 each coordinate Fe cation. Positions 83–88 match the Histidine box-1 motif; the sequence is HRNLAH. The short motif at 120-124 is the Histidine box-2 element; it reads HRYHH. The helical transmembrane segment at 180–200 threads the bilayer; that stretch reads VLYHILTFGFLLYYFGGLSFL. Fe cation contacts are provided by H223, H252, H255, and H256. The Histidine box-3 signature appears at 252–256; that stretch reads HNNHH. A helical membrane pass occupies residues 268 to 288; sequence WWQIDISWYIVRFLEIIGLAT.

It belongs to the fatty acid desaturase type 1 family. It depends on Fe cation as a cofactor. As to expression, strongly expressed in inflorescence meristems, leaves, and flowers, and weakly in roots and seedpods.

The protein resides in the endoplasmic reticulum membrane. It is found in the plastid. Its subcellular location is the chloroplast membrane. It functions in the pathway lipid metabolism; polyunsaturated fatty acid biosynthesis. Involved in delta-9 desaturation of fatty acids. Involved in the production of very-long-chain fatty acids (VLCFAs). May desaturate chloroplastic monogalactosyl diacylglycerol (MGDG) and alter chloroplast membrane fluidity, which is required to prime a cold acclimation response. The sequence is that of Delta-9 acyl-lipid desaturase 1 from Arabidopsis thaliana (Mouse-ear cress).